A 151-amino-acid polypeptide reads, in one-letter code: Allatostatin-A (151 aa).

The N-terminal stretch at 1–21 (MNSLHAHLLLLAVCCVGYIAS) is a signal peptide. Positions 22–54 (SPVIGQDQRSGDSDADVLLAADEMADNGGDNID) are excised as a propeptide. 3 positions are modified to leucine amide: Leu64, Leu88, and Leu99. A propeptide spanning residues 103–135 (SDYDYDQDNEIDYRVPPANYLAAERAVRPGRQN) is cleaved from the precursor. Residues 131 to 151 (PGRQNKRTTRPQPFNFGLGRR) are disordered. Leu148 bears the Leucine amide mark.

This sequence belongs to the allatostatin family.

The protein localises to the secreted. Its function is as follows. May act as a neurotransmitter or neuromodulator. The protein is Allatostatin-A (AstA) of Drosophila melanogaster (Fruit fly).